Reading from the N-terminus, the 475-residue chain is 3-isopropylmalate dehydratase large subunit (475 aa).

[4Fe-4S] cluster contacts are provided by Cys353, Cys414, and Cys417.

This sequence belongs to the aconitase/IPM isomerase family. LeuC type 1 subfamily. Heterodimer of LeuC and LeuD. The cofactor is [4Fe-4S] cluster.

The enzyme catalyses (2R,3S)-3-isopropylmalate = (2S)-2-isopropylmalate. It functions in the pathway amino-acid biosynthesis; L-leucine biosynthesis; L-leucine from 3-methyl-2-oxobutanoate: step 2/4. Its function is as follows. Catalyzes the isomerization between 2-isopropylmalate and 3-isopropylmalate, via the formation of 2-isopropylmaleate. This chain is 3-isopropylmalate dehydratase large subunit, found in Ectopseudomonas mendocina (strain ymp) (Pseudomonas mendocina).